The following is a 550-amino-acid chain: Medium-chain acyl-CoA ligase Mig (550 aa).

The first 19 residues, 1–19 (MSDTTTAFTVPAVAKAVAA), serve as a signal peptide directing secretion.

Belongs to the ATP-dependent AMP-binding enzyme family.

The protein localises to the secreted. It localises to the cell wall. The enzyme catalyses a medium-chain fatty acid + ATP + CoA = a medium-chain fatty acyl-CoA + AMP + diphosphate. It carries out the reaction hexanoate + ATP + CoA = hexanoyl-CoA + AMP + diphosphate. The catalysed reaction is heptanoate + ATP + CoA = heptanoyl-CoA + AMP + diphosphate. It catalyses the reaction octanoate + ATP + CoA = octanoyl-CoA + AMP + diphosphate. The enzyme catalyses decanoate + ATP + CoA = decanoyl-CoA + AMP + diphosphate. It carries out the reaction dodecanoate + ATP + CoA = dodecanoyl-CoA + AMP + diphosphate. The catalysed reaction is tetradecanoate + ATP + CoA = tetradecanoyl-CoA + AMP + diphosphate. It catalyses the reaction (9Z)-octadecenoate + ATP + CoA = (9Z)-octadecenoyl-CoA + AMP + diphosphate. The enzyme catalyses (9Z,12Z,15Z)-octadecatrienoate + ATP + CoA = (9Z,12Z,15Z)-octadecatrienoyl-CoA + AMP + diphosphate. It carries out the reaction (5Z,8Z,11Z,14Z)-eicosatetraenoate + ATP + CoA = (5Z,8Z,11Z,14Z)-eicosatetraenoyl-CoA + AMP + diphosphate. Its pathway is lipid metabolism; fatty acid metabolism. With respect to regulation, inhibited by 2-hydroxydodecanoic acid, a typical inhibitor of medium-chain acyl-CoA synthetases. In terms of biological role, catalyzes the activation of medium-chain fatty acids as acyl-coenzyme A (acyl-CoA). Shows maximal activity with saturated fatty acids of medium-chain length between C6 and C12. Has lower activity with tridecanoic acid (C13), tetradecanoic acid (C14) and with unsaturated fatty acids like oleic acid (C18:1), linolenic acid (C18:3) and arachidonic acid (C20:4). Shows weak activity with some aromatic carbon acids. Involved in the metabolism of fatty acid during mycobacterial survival in macrophages. The sequence is that of Medium-chain acyl-CoA ligase Mig from Mycobacterium avium.